The sequence spans 545 residues: Cytochrome P450 monooxygenase 212 (545 aa).

The first 14 residues, 1–14, serve as a signal peptide directing secretion; that stretch reads MAAYAWLYCALALG. Cysteine 486 contacts heme.

This sequence belongs to the cytochrome P450 family. The cofactor is heme.

It functions in the pathway secondary metabolite biosynthesis. Functionally, cytochrome P450 monooxygenase that is able to use anthracene and pyrene as substrates for oxidation. The chain is Cytochrome P450 monooxygenase 212 from Postia placenta (strain ATCC 44394 / Madison 698-R) (Brown rot fungus).